Consider the following 325-residue polypeptide: 5-dehydro-2-deoxygluconokinase (325 aa).

The protein belongs to the carbohydrate kinase PfkB family.

The catalysed reaction is 5-dehydro-2-deoxy-D-gluconate + ATP = 6-phospho-5-dehydro-2-deoxy-D-gluconate + ADP + H(+). Its pathway is polyol metabolism; myo-inositol degradation into acetyl-CoA; acetyl-CoA from myo-inositol: step 5/7. Catalyzes the phosphorylation of 5-dehydro-2-deoxy-D-gluconate (2-deoxy-5-keto-D-gluconate or DKG) to 6-phospho-5-dehydro-2-deoxy-D-gluconate (DKGP). The polypeptide is 5-dehydro-2-deoxygluconokinase (Bacillus licheniformis (strain ATCC 14580 / DSM 13 / JCM 2505 / CCUG 7422 / NBRC 12200 / NCIMB 9375 / NCTC 10341 / NRRL NRS-1264 / Gibson 46)).